The chain runs to 151 residues: ATP synthase subunit b' (151 aa).

Residues 18 to 38 (TLPLMALQVVLLTFILNALFF) form a helical membrane-spanning segment.

This sequence belongs to the ATPase B chain family. F-type ATPases have 2 components, F(1) - the catalytic core - and F(0) - the membrane proton channel. F(1) has five subunits: alpha(3), beta(3), gamma(1), delta(1), epsilon(1). F(0) has four main subunits: a(1), b(1), b'(1) and c(10-14). The alpha and beta chains form an alternating ring which encloses part of the gamma chain. F(1) is attached to F(0) by a central stalk formed by the gamma and epsilon chains, while a peripheral stalk is formed by the delta, b and b' chains.

It localises to the cellular thylakoid membrane. Functionally, f(1)F(0) ATP synthase produces ATP from ADP in the presence of a proton or sodium gradient. F-type ATPases consist of two structural domains, F(1) containing the extramembraneous catalytic core and F(0) containing the membrane proton channel, linked together by a central stalk and a peripheral stalk. During catalysis, ATP synthesis in the catalytic domain of F(1) is coupled via a rotary mechanism of the central stalk subunits to proton translocation. Its function is as follows. Component of the F(0) channel, it forms part of the peripheral stalk, linking F(1) to F(0). The b'-subunit is a diverged and duplicated form of b found in plants and photosynthetic bacteria. The protein is ATP synthase subunit b' of Prochlorococcus marinus (strain MIT 9303).